A 250-amino-acid polypeptide reads, in one-letter code: 2,5-dichloro-2,5-cyclohexadiene-1,4-diol dehydrogenase (250 aa).

Position 9–34 (9–34 (IIVTGGGSGIGRATVELLVASGANVA)) interacts with NAD(+). Residue serine 141 participates in substrate binding. Catalysis depends on tyrosine 154, which acts as the Proton acceptor.

It belongs to the short-chain dehydrogenases/reductases (SDR) family.

The enzyme catalyses 2,5-dichlorocyclohexa-2,5-dien-1,4-diol + NAD(+) = 2,5-dichlorohydroquinone + NADH + H(+). It participates in xenobiotic degradation; gamma-hexachlorocyclohexane degradation. In terms of biological role, catalyzes the dehydrogenation of 2,5-dichloro-2,5-cyclohexadiene-1,4-diol (2,5-DDOL) to 2,5-dichlorohydroquinone (2,5-DCHQ), a step in the degradation of gamma-hexachlorocyclohexane (gamma-HCH or lindane). The polypeptide is 2,5-dichloro-2,5-cyclohexadiene-1,4-diol dehydrogenase (Sphingobium indicum (strain DSM 16412 / CCM 7286 / MTCC 6364 / B90A)).